Reading from the N-terminus, the 397-residue chain is Acetate kinase (397 aa).

Asn8 serves as a coordination point for Mg(2+). An ATP-binding site is contributed by Lys15. Arg90 serves as a coordination point for substrate. Residue Asp147 is the Proton donor/acceptor of the active site. ATP-binding positions include 207-211 (HLGAG), 283-285 (DMR), and 330-334 (GVGEN). Mg(2+) is bound at residue Glu383.

Belongs to the acetokinase family. In terms of assembly, homodimer. Requires Mg(2+) as cofactor. Mn(2+) serves as cofactor.

The protein localises to the cytoplasm. The catalysed reaction is acetate + ATP = acetyl phosphate + ADP. The protein operates within metabolic intermediate biosynthesis; acetyl-CoA biosynthesis; acetyl-CoA from acetate: step 1/2. Functionally, catalyzes the formation of acetyl phosphate from acetate and ATP. Can also catalyze the reverse reaction. The polypeptide is Acetate kinase (Fructilactobacillus sanfranciscensis (Lactobacillus sanfranciscensis)).